A 535-amino-acid chain; its full sequence is Bifunctional purine biosynthesis protein PurH (535 aa).

The MGS-like domain maps to 1–145 (MAQTALISVS…KNWKDVGVLT (145 aa)).

It belongs to the PurH family.

It carries out the reaction (6R)-10-formyltetrahydrofolate + 5-amino-1-(5-phospho-beta-D-ribosyl)imidazole-4-carboxamide = 5-formamido-1-(5-phospho-D-ribosyl)imidazole-4-carboxamide + (6S)-5,6,7,8-tetrahydrofolate. The enzyme catalyses IMP + H2O = 5-formamido-1-(5-phospho-D-ribosyl)imidazole-4-carboxamide. It functions in the pathway purine metabolism; IMP biosynthesis via de novo pathway; 5-formamido-1-(5-phospho-D-ribosyl)imidazole-4-carboxamide from 5-amino-1-(5-phospho-D-ribosyl)imidazole-4-carboxamide (10-formyl THF route): step 1/1. Its pathway is purine metabolism; IMP biosynthesis via de novo pathway; IMP from 5-formamido-1-(5-phospho-D-ribosyl)imidazole-4-carboxamide: step 1/1. The sequence is that of Bifunctional purine biosynthesis protein PurH from Variovorax paradoxus (strain S110).